A 396-amino-acid chain; its full sequence is Bone morphogenetic protein 2 (396 aa).

Positions 1–23 (MVAGTRCLLALLLPQVLLGGAAG) are cleaved as a signal peptide. Residues 24 to 282 (LVPELGRRKF…GHPLHKREKR (259 aa)) constitute a propeptide, cleaved by PCSK5. The disordered stretch occupies residues 84–121 (RRHSGQPGSPAPDHRLERAASRANTVRSFHHEESLEEL). Ser87 is subject to Phosphoserine. N-linked (GlcNAc...) asparagine glycosylation is found at Asn135, Asn163, Asn164, and Asn200. The segment at 271 to 293 (GKGHPLHKREKRQAKHKQRKRLK) is disordered. The segment covering 274–293 (HPLHKREKRQAKHKQRKRLK) has biased composition (basic residues). 3 disulfides stabilise this stretch: Cys296-Cys361, Cys325-Cys393, and Cys329-Cys395. A glycan (N-linked (GlcNAc...) (high mannose) asparagine) is linked at Asn338.

It belongs to the TGF-beta family. As to quaternary structure, homodimer; disulfide-linked. Interacts with SOSTDC1. Interacts with GREM2, RGMA, RGMB and RGMC. Interacts with ASPN. Interacts with MAFP5. Interacts with FBN1 (via N-terminal domain) and FBN2. Interacts with type I receptor BMPR1A. Interacts with type II receptor BMPR2. Interacts with SCUBE3. Interacts with TNFAIP6 (primarily via Link domain); this interaction is inhibited by hyaluronan. Interacts with ERFE. Interacts with BMPR1A/ALK3; the interaction may induce HAMP expression. Forms heterodimers with BMP6 in vitro; the heterodimer then binds to its receptor BMPR1A /ALK3 and may induce HAMP expression. Interacts with TGFBR3. Particularly abundant in lung, spleen and colon and in low but significant levels in heart, brain, placenta, liver, skeletal muscle, kidney, pancreas, prostate, ovary and small intestine.

Its subcellular location is the secreted. In terms of biological role, growth factor of the TGF-beta superfamily that plays essential roles in many developmental processes, including cardiogenesis, neurogenesis, and osteogenesis. Induces cartilage and bone formation. Initiates the canonical BMP signaling cascade by associating with type I receptor BMPR1A and type II receptor BMPR2. Once all three components are bound together in a complex at the cell surface, BMPR2 phosphorylates and activates BMPR1A. In turn, BMPR1A propagates signal by phosphorylating SMAD1/5/8 that travel to the nucleus and act as activators and repressors of transcription of target genes. Also acts to promote expression of HAMP, via the interaction with its receptor BMPR1A/ALK3. Can also signal through non-canonical pathways such as ERK/MAP kinase signaling cascade that regulates osteoblast differentiation. Also stimulates the differentiation of myoblasts into osteoblasts via the EIF2AK3-EIF2A-ATF4 pathway by stimulating EIF2A phosphorylation which leads to increased expression of ATF4 which plays a central role in osteoblast differentiation. Acts as a positive regulator of odontoblast differentiation during mesenchymal tooth germ formation, expression is repressed during the bell stage by MSX1-mediated inhibition of CTNNB1 signaling. The polypeptide is Bone morphogenetic protein 2 (BMP2) (Homo sapiens (Human)).